The chain runs to 468 residues: FAD-linked oxidoreductase azaG (468 aa).

The first 16 residues, 1-16 (MQLSGILSWLLSWLWA), serve as a signal peptide directing secretion. Asn44 is a glycosylation site (N-linked (GlcNAc...) asparagine). The FAD-binding PCMH-type domain maps to 54 to 228 (TVHGAPHYLG…TSATYRTHQA (175 aa)). N-linked (GlcNAc...) asparagine glycans are attached at residues Asn272, Asn348, and Asn464.

It belongs to the oxygen-dependent FAD-linked oxidoreductase family. FAD serves as cofactor.

It participates in secondary metabolite biosynthesis. Its function is as follows. FAD-linked oxidoreductase; part of the gene cluster that mediates the biosynthesis of azaphilones, a class of fungal metabolites characterized by a highly oxygenated pyrano-quinone bicyclic core and exhibiting a broad range of bioactivities. In the first step, the non-reducing polyketide synthase azaA forms the hexaketide precursor from successive condensations of five malonyl-CoA units, presumably with a simple acetyl-CoA starter unit. The reactive polyketide chain then undergoes a PT-mediated C2-C7 cyclization to afford the aromatic ring and is eventually released as an aldehyde through the R-domain. The putative ketoreductase azaE is proposed to catalyze the reduction of the terminal ketone resulting in the early culture product FK17-P2a. The monooxygenase azaH was demonstrated to be the only enzyme required to convert FK17-P2a to azanigerone E. AzaH first hydroxylates the benzaldehyde intermediate FK17-P2a at C4, which triggers the formation of the pyran-ring to afford azanigerone E. In parallel, the 2,4-dimethylhexanoyl chain is synthesized by the HR-PKS azaB and is proposed to be transferred to the C4-hydroxyl of azanigerone E by the acyltransferase azaD directly from the ACP domain of azaB. Alternatively, the 2,4-dimethyl-hexanoyl chain may be offloaded from the HR-PKS as a carboxylic acid and converted to an acyl-CoA by azaF. The resulting acyl-CoA molecule could then be taken up as a substrate by AzaD to form azanigerone B. To yield the carboxylic acid substituent in azanigerone A, the hydroxypropyl side chain of azanigerone B would need to undergo a C-C oxidative cleavage catalyzed by cytochrome P450 AzaI. AzaI is proposed to act on a vicinal diol that leads to a C-C bond scission either through an alkoxyradical intermediate or a peroxy complex. In the biosynthesis of azanigerone A, azanigerone B first undergoes hydroxylation at C10, possibly catalyzed by one of the two FAD-dependent monooxygenases encoded in the cluster, azaG or azaL, resulting in the vicinal diol azanigerone C. Oxidative cleavage of azanigerone C by azaI would yield the corresponding aldehyde derivative of azanigerone A. Finally, the dehydrogenase azaJ is proposed to convert the aldehyde functional group into the carboxylic acid, completing the conversion from azanigerone B to azanigerone A. Alternatively, the oxidation of aldehyde to carboxylic acid may be catalyzed by the same P450 enzyme azaI via consecutive oxidation or by endogenous alcohol dehydrogenase. This is FAD-linked oxidoreductase azaG from Aspergillus niger (strain ATCC 1015 / CBS 113.46 / FGSC A1144 / LSHB Ac4 / NCTC 3858a / NRRL 328 / USDA 3528.7).